The sequence spans 453 residues: Luminescence regulatory protein LuxO (453 aa).

The region spanning Met1–Ile112 is the Response regulatory domain. Asp47 bears the 4-aspartylphosphate mark. Positions Phe133–Val362 constitute a Sigma-54 factor interaction domain. Residues Gly161–Glu168 and Ala224–Glu233 each bind ATP.

In terms of biological role, acts negatively to control the expression of luminescence. At low cell density, LuxO is phosphorylated, and together with sigma-54, causes repression of the luxCDABEGH operon. This repression could be indirect, LuxO could activate a negative regulator of luminescence. At high cell density, LuxO is dephosphorylated and inactive, therefore the luxCDABEGH operon is not repressed and light is emitted. LuxO and sigma-54 have also a role in activating the production of siderophore and in regulating the rugose colony morphology phenotype. The chain is Luminescence regulatory protein LuxO (luxO) from Vibrio campbellii (strain ATCC BAA-1116).